The following is a 189-amino-acid chain: Chitin synthase 1 (189 aa).

It belongs to the chitin synthase family. Class I subfamily.

The protein resides in the cell membrane. It carries out the reaction [(1-&gt;4)-N-acetyl-beta-D-glucosaminyl](n) + UDP-N-acetyl-alpha-D-glucosamine = [(1-&gt;4)-N-acetyl-beta-D-glucosaminyl](n+1) + UDP + H(+). Functionally, polymerizes chitin, a structural polymer of the cell wall and septum, by transferring the sugar moiety of UDP-GlcNAc to the non-reducing end of the growing chitin polymer. This is Chitin synthase 1 (chs1) from Aspergillus niger.